A 330-amino-acid chain; its full sequence is PDZ and LIM domain protein 4 (330 aa).

The PDZ domain maps to 1-84 (MPHSVTLRGP…HLTLSVSRPE (84 aa)). The tract at residues 104–180 (IDPEIQDGSP…DPARGLPRSR (77 aa)) is disordered. Residues 111–121 (GSPTTSRRPSG) are compositionally biased toward low complexity. Residues Ser112, Ser116, Ser120, and Ser135 each carry the phosphoserine modification. The span at 148-163 (NGSSEATLPAQMSTLH) shows a compositional bias: polar residues. One can recognise an LIM zinc-binding domain in the interval 253 to 312 (PECTRCGHGIVGTIVKARDKLYHPECFMCSDCGLNLKQRGYFFLDERLYCESHAKARVKP).

Homodimer. Interacts with PTPN13. Interacts (via C-terminus only or via combined C-terminus and LIM domain, but not LIM domain only) with PTPN13 (via the second or fourth PDZ domains). Found in a complex with PTPN13 and TRIP6. Interacts (via PDZ domain) with ACTN1 and ACTN2 (via C-terminal SDL residues). Interacts (via PDZ domain) with TRIP6 (via the second LIM domain or via the third LIM domain plus C-terminus). Interacts (via LIM domain) with GRIA1 (via C-terminus); this interaction as well as the interaction with alpha-actinin is required for their colocalization in early endosomes. Interacts with PDLIM1. Forms (via LIM domain) a heterodimer with PDLIM3. Interacts directly with SRC (via kinase domain and to a lesser extent the SH2 domain). Isoform 2 interacts with NQO1. NQO1-stabilized isoform 2 heterodimerizes with isoform 1. Post-translationally, phosphorylated on tyrosine residue(s). Can be dephosphorylated by PTPN13. Found in brain.

The protein resides in the cytoplasm. Its subcellular location is the cytoskeleton. It localises to the nucleus. It is found in the perinuclear region. The protein localises to the cell projection. The protein resides in the lamellipodium. Its subcellular location is the dendritic spine. It localises to the early endosome membrane. It is found in the recycling endosome membrane. The protein localises to the synapse. The protein resides in the synaptosome. Suppresses SRC activation by recognizing and binding to active SRC and facilitating PTPN13-mediated dephosphorylation of SRC 'Tyr-419' leading to its inactivation. Inactivated SRC dissociates from this protein allowing the initiation of a new SRC inactivation cycle. Involved in reorganization of the actin cytoskeleton. In nonmuscle cells, binds to ACTN1 (alpha-actinin-1), increases the affinity of ACTN1 to F-actin (filamentous actin), and promotes formation of actin stress fibers. Involved in regulation of the synaptic AMPA receptor transport in dendritic spines of hippocampal pyramidal neurons directing the receptors toward an insertion at the postsynaptic membrane. Links endosomal surface-internalized GRIA1-containing AMPA receptors to the alpha-actinin/actin cytoskeleton. Increases AMPA receptor-mediated excitatory postsynaptic currents in neurons. Its function is as follows. Involved in reorganization of the actin cytoskeleton and in regulation of cell migration. In response to oxidative stress, binds to NQO1, which stabilizes it and protects it from ubiquitin-independent degradation by the core 20S proteasome. Stabilized protein is able to heterodimerize with isoform 1 changing the subcellular location of it from cytoskeleton and nuclei to cytosol, leading to loss of isoforms 1 ability to induce formation of actin stress fibers. Counteracts the effects produced by isoform 1 on organization of actin cytoskeleton and cell motility to fine-tune actin cytoskeleton rearrangement and to attenuate cell migration. This is PDZ and LIM domain protein 4 (PDLIM4) from Homo sapiens (Human).